The following is a 216-amino-acid chain: 3-isopropylmalate dehydratase small subunit (216 aa).

The protein belongs to the LeuD family. LeuD type 1 subfamily. As to quaternary structure, heterodimer of LeuC and LeuD.

It catalyses the reaction (2R,3S)-3-isopropylmalate = (2S)-2-isopropylmalate. It functions in the pathway amino-acid biosynthesis; L-leucine biosynthesis; L-leucine from 3-methyl-2-oxobutanoate: step 2/4. Catalyzes the isomerization between 2-isopropylmalate and 3-isopropylmalate, via the formation of 2-isopropylmaleate. In Cupriavidus pinatubonensis (strain JMP 134 / LMG 1197) (Cupriavidus necator (strain JMP 134)), this protein is 3-isopropylmalate dehydratase small subunit.